A 442-amino-acid chain; its full sequence is Serum response factor-binding protein 1 (442 aa).

Coiled-coil stretches lie at residues 55 to 77 (EDAL…AMKE) and 118 to 140 (LLKR…RQNA). Disordered regions lie at residues 137-336 (RQNA…LETH) and 358-442 (FHSL…TFDD). Basic and acidic residues-rich tracts occupy residues 149 to 159 (ASKESQCEDIP) and 167 to 188 (ESQH…DPTT). Lys202 is covalently cross-linked (Glycyl lysine isopeptide (Lys-Gly) (interchain with G-Cter in SUMO2)). Ser215 is subject to Phosphoserine. The segment covering 237-247 (GNHSQGKASTR) has biased composition (polar residues). Positions 266–278 (VSEEEKEYFDDST) are enriched in acidic residues. Phosphoserine occurs at positions 277, 292, and 294. Lys329 participates in a covalent cross-link: Glycyl lysine isopeptide (Lys-Gly) (interchain with G-Cter in SUMO2). Ser362 carries the post-translational modification Phosphoserine. Residues 367-382 (SRRDPREQAPKNKAPD) show a composition bias toward basic and acidic residues.

In terms of assembly, interacts with SRF. Forms complexes with SRF and SRF cofactors ARID2, MYOCD and NKX2-5. Interacts with the N-terminus of SLC2A4.

The protein resides in the cytoplasm. It is found in the perinuclear region. May be involved in regulating transcriptional activation of cardiac genes during the aging process. May play a role in biosynthesis and/or processing of SLC2A4 in adipose cells. This chain is Serum response factor-binding protein 1, found in Rattus norvegicus (Rat).